Consider the following 213-residue polypeptide: Protein Flattop (213 aa).

The disordered stretch occupies residues 127–213 (VDQPAEQSKI…HNSRPASQEK (87 aa)). Residues 151-213 (QHIQDQSRPA…HNSRPASQEK (63 aa)) are compositionally biased toward polar residues.

Belongs to the Flattop family.

It localises to the cytoplasm. It is found in the cytoskeleton. Its subcellular location is the cilium basal body. The protein localises to the cell projection. The protein resides in the cilium. It localises to the apical cell membrane. It is found in the cilium axoneme. Its function is as follows. Microtubule inner protein (MIP) part of the dynein-decorated doublet microtubules (DMTs) in cilia axoneme. Acts as a regulator of cilium basal body docking and positioning in mono- and multiciliated cells. Regulates basal body docking and cilia formation in multiciliated lung cells. Regulates kinocilium positioning and stereocilia bundle morphogenesis in the inner ear. The sequence is that of Protein Flattop from Danio rerio (Zebrafish).